Reading from the N-terminus, the 434-residue chain is Tryptophan dimethylallyltransferase nptA (434 aa).

L-tryptophan-binding positions include 91 to 92 (SL) and E100. Substrate is bound by residues R115, K202, and Y204. Residue Y206 coordinates L-tryptophan. Substrate-binding residues include R271, K273, Y275, Y358, Y423, and Y427.

It belongs to the tryptophan dimethylallyltransferase family. In terms of assembly, homodimer.

It carries out the reaction L-tryptophan + dimethylallyl diphosphate = 4-(3-methylbut-2-enyl)-L-tryptophan + diphosphate. It functions in the pathway secondary metabolite biosynthesis. Its function is as follows. Nonribosomal peptide synthase involved in the synthesis of nidulanin A and derived compounds. Nidulanin A is a tetracyclopeptide with the sequence L-Phe-L-Kyn-L-Val-D-Val and an isoprene unit N-linked to the amino group of L-kynurenine. The NRPS nlsA is responsible of the synthesis of the cyclopeptide and the prenyltransferase nptA adds the isoprene unit on the L-kynurenine residue of nidulanin A. Further modifications lead to additional oxygenated related compounds. This chain is Tryptophan dimethylallyltransferase nptA, found in Emericella nidulans (strain FGSC A4 / ATCC 38163 / CBS 112.46 / NRRL 194 / M139) (Aspergillus nidulans).